A 341-amino-acid chain; its full sequence is 4-hydroxy-2-oxovalerate aldolase (341 aa).

In terms of domain architecture, Pyruvate carboxyltransferase spans 5–257 (ITLHDMTLRD…ETGVDVFRIA (253 aa)). A substrate-binding site is contributed by 13-14 (RD). Aspartate 14 provides a ligand contact to Mn(2+). Catalysis depends on histidine 17, which acts as the Proton acceptor. Serine 167 and histidine 196 together coordinate substrate. Mn(2+) contacts are provided by histidine 196 and histidine 198. Tyrosine 287 contributes to the substrate binding site.

This sequence belongs to the 4-hydroxy-2-oxovalerate aldolase family.

It catalyses the reaction (S)-4-hydroxy-2-oxopentanoate = acetaldehyde + pyruvate. This is 4-hydroxy-2-oxovalerate aldolase (mhpE) from Cupriavidus taiwanensis (strain DSM 17343 / BCRC 17206 / CCUG 44338 / CIP 107171 / LMG 19424 / R1) (Ralstonia taiwanensis (strain LMG 19424)).